A 394-amino-acid chain; its full sequence is Elongation factor Tu (394 aa).

One can recognise a tr-type G domain in the interval 10–204 (KEHANIGTIG…AVDDYIPTPE (195 aa)). The G1 stretch occupies residues 19–26 (GHVDHGKT). A GTP-binding site is contributed by 19–26 (GHVDHGKT). Threonine 26 is a binding site for Mg(2+). The segment at 60–64 (GITIN) is G2. The G3 stretch occupies residues 81 to 84 (DCPG). Residues 81–85 (DCPGH) and 136–139 (NKVD) contribute to the GTP site. The interval 136 to 139 (NKVD) is G4. The G5 stretch occupies residues 174–176 (SAL).

This sequence belongs to the TRAFAC class translation factor GTPase superfamily. Classic translation factor GTPase family. EF-Tu/EF-1A subfamily. Monomer.

It localises to the cytoplasm. It catalyses the reaction GTP + H2O = GDP + phosphate + H(+). In terms of biological role, GTP hydrolase that promotes the GTP-dependent binding of aminoacyl-tRNA to the A-site of ribosomes during protein biosynthesis. In Staphylococcus haemolyticus (strain JCSC1435), this protein is Elongation factor Tu.